A 582-amino-acid chain; its full sequence is GPI-anchor transamidase component PIGT (582 aa).

Residues 1–25 (MAAAMPLGLPLRLLVLLLVGRGCCG) form the signal peptide. Residues 26–529 (CAEGPRDSLR…NLPTPDFSMP (504 aa)) are Lumenal-facing. An N-linked (GlcNAc...) asparagine glycan is attached at asparagine 168. 2 disulfide bridges follow: cysteine 199–cysteine 276 and cysteine 230–cysteine 235. N-linked (GlcNAc...) asparagine glycosylation is found at asparagine 295 and asparagine 331. The a 2-acyl-6-[6-phosphoethanolamine-alpha-D-mannosyl-(1-&gt;2)-6-phosphoethanolamine-alpha-D-mannosyl-(1-&gt;6)-2-phosphoethanolamine-alpha-D-mannosyl-(1-&gt;4)-alpha-D-glucosaminyl]-1-(1-radyl,2-acyl-sn-glycero-3-phospho)-1D-myo-inositol site is built by asparagine 465, aspartate 525, serine 527, and asparagine 531. Residues 530-552 (YNVICLTCTVVAVCYGSFYNLLT) form a helical membrane-spanning segment. The Cytoplasmic segment spans residues 553 to 582 (RTFHIEEPKSGGLAKRLANLIRRARGVPPL).

This sequence belongs to the PIGT family. Heteropentamer. Part of the GPI-anchor transamidase complex, consisting of PIGK, PIGT, PIGS, PIGU and GAA1. In terms of processing, the disulfide bond between PIGK/GPI8 and PIGT is important for normal enzyme activity.

It is found in the endoplasmic reticulum membrane. It participates in glycolipid biosynthesis; glycosylphosphatidylinositol-anchor biosynthesis. Functionally, component of the glycosylphosphatidylinositol-anchor (GPI-anchor) transamidase (GPI-T) complex that catalyzes the formation of the linkage between a proprotein and a GPI-anchor and participates in GPI anchored protein biosynthesis. May play a crucial role in GPI-T complex assembly in the luminal layer. Binds GPI-anchor. This Mus musculus (Mouse) protein is GPI-anchor transamidase component PIGT.